A 767-amino-acid chain; its full sequence is Glucoamylase S1 (767 aa).

An N-terminal signal peptide occupies residues Met-1–Gly-21. Disordered regions lie at residues Arg-29–Ile-83 and Thr-125–Pro-149. Residues Gly-30–Ser-48 show a composition bias toward low complexity. Asn-35 carries N-linked (GlcNAc...) asparagine glycosylation. Positions Ala-49–Tyr-66 are enriched in polar residues. 2 stretches are compositionally biased toward low complexity: residues Thr-71–Ile-83 and Ser-131–Pro-149. N-linked (GlcNAc...) asparagine glycosylation is found at Asn-308, Asn-322, Asn-414, Asn-423, and Asn-434. Residues Val-348–Tyr-691 are h subunit. Trp-455 contacts substrate. The N-linked (GlcNAc...) asparagine glycan is linked to Asn-513. Residue Asp-518 is the Proton acceptor of the active site. The Proton donor role is filled by Glu-521. N-linked (GlcNAc...) asparagine glycosylation is found at Asn-546, Asn-645, Asn-650, Asn-720, and Asn-741. Residues Arg-692–Asn-767 form a y subunit region.

Belongs to the glycosyl hydrolase 15 family.

The enzyme catalyses Hydrolysis of terminal (1-&gt;4)-linked alpha-D-glucose residues successively from non-reducing ends of the chains with release of beta-D-glucose.. The sequence is that of Glucoamylase S1 (STA1) from Saccharomyces cerevisiae (Baker's yeast).